Here is a 174-residue protein sequence, read N- to C-terminus: tRNA (cytidine(56)-2'-O)-methyltransferase (174 aa).

S-adenosyl-L-methionine-binding positions include L80, 105–109 (GAEKV), and 123–130 (ISNQPHSE).

Belongs to the aTrm56 family. In terms of assembly, homodimer.

It is found in the cytoplasm. The enzyme catalyses cytidine(56) in tRNA + S-adenosyl-L-methionine = 2'-O-methylcytidine(56) in tRNA + S-adenosyl-L-homocysteine + H(+). In terms of biological role, specifically catalyzes the AdoMet-dependent 2'-O-ribose methylation of cytidine at position 56 in tRNAs. The polypeptide is tRNA (cytidine(56)-2'-O)-methyltransferase (Metallosphaera sedula (strain ATCC 51363 / DSM 5348 / JCM 9185 / NBRC 15509 / TH2)).